The sequence spans 403 residues: Argininosuccinate synthase (403 aa).

8-16 contacts ATP; the sequence is AYSGGLDTS. Tyrosine 87 is a binding site for L-citrulline. Glycine 117 is an ATP binding site. L-aspartate is bound by residues threonine 119, asparagine 123, and aspartate 124. L-citrulline is bound at residue asparagine 123. Arginine 127, serine 175, glutamate 259, and tyrosine 271 together coordinate L-citrulline.

The protein belongs to the argininosuccinate synthase family. Type 1 subfamily. Homotetramer.

It is found in the cytoplasm. It carries out the reaction L-citrulline + L-aspartate + ATP = 2-(N(omega)-L-arginino)succinate + AMP + diphosphate + H(+). It functions in the pathway amino-acid biosynthesis; L-arginine biosynthesis; L-arginine from L-ornithine and carbamoyl phosphate: step 2/3. The chain is Argininosuccinate synthase from Salinispora arenicola (strain CNS-205).